A 35-amino-acid chain; its full sequence is Conotoxin Cal6.1d (35 aa).

Residues 1–8 (GLTRPSKR) constitute a propeptide that is removed on maturation. Disulfide bonds link C9/C25, C16/C29, and C24/C34.

The protein belongs to the conotoxin O1 superfamily. In terms of tissue distribution, expressed by the venom duct.

Its subcellular location is the secreted. Its function is as follows. Probable neurotoxin with unknown target. Possibly targets ion channels. The sequence is that of Conotoxin Cal6.1d from Californiconus californicus (California cone).